Here is an 833-residue protein sequence, read N- to C-terminus: Serine-rich coiled-coil domain-containing protein 2 (833 aa).

The interval 178–208 (NRSSGNVQKPRVNSCASRSSSGESLAQSPDN) is disordered. Over residues 191 to 208 (SCASRSSSGESLAQSPDN) the composition is skewed to polar residues. Phosphoserine is present on Ser-222. 4 disordered regions span residues 321–345 (LLKSSRPPFSGPMTVDSNKNPPADM), 424–452 (NRTRITPEEMTLKEEKHESRPSKDIFDSP), 478–508 (KHTSGNNLISPDTDYRAGSSFELSPSDSSDG), and 602–631 (DHYHLSHPGHYHHHGQSDLSRGSPYRESPL). Ser-451 is subject to Phosphoserine. Over residues 496–506 (SSFELSPSDSS) the composition is skewed to low complexity. Residues 606–615 (LSHPGHYHHH) are compositionally biased toward basic residues. Residues 711–747 (DQIYKNEDLLNEITQLKEEIKKKDEKIQLLEQQLATR) are a coiled coil. Residues 789–833 (FQGMPRTVPPHRRQTSSTTAFQQPSQIYRPRPGKTNKATTYRGPQ) form a disordered region. The segment covering 803–814 (TSSTTAFQQPSQ) has biased composition (polar residues).

This sequence belongs to the CCSER family. In terms of tissue distribution, expressed in brain (at protein level).

It localises to the cytoplasm. It is found in the cytoskeleton. Microtubule-binding protein which might play a role in microtubule bundling. This chain is Serine-rich coiled-coil domain-containing protein 2 (Ccser2), found in Mus musculus (Mouse).